The following is a 374-amino-acid chain: Type IV secretion system protein PtlG (374 aa).

A helical membrane pass occupies residues 38-56 (WMFALVAVALSCLLATGIW). Positions 86–117 (HPREPEPAPLPDMPAAPDPILPQPRPAPPVPP) are disordered. The span at 92–117 (PAPLPDMPAAPDPILPQPRPAPPVPP) shows a compositional bias: pro residues.

Belongs to the TrbI/VirB10 family.

Its subcellular location is the cell membrane. Its function is as follows. Component of the type IV secretion system ptl required for secretion of assembled pertussis toxin (PTX) through the outer membrane. The sequence is that of Type IV secretion system protein PtlG (ptlG) from Bordetella pertussis (strain Tohama I / ATCC BAA-589 / NCTC 13251).